A 247-amino-acid polypeptide reads, in one-letter code: 3-deoxy-manno-octulosonate cytidylyltransferase (247 aa).

It belongs to the KdsB family.

The protein localises to the cytoplasm. The catalysed reaction is 3-deoxy-alpha-D-manno-oct-2-ulosonate + CTP = CMP-3-deoxy-beta-D-manno-octulosonate + diphosphate. It functions in the pathway nucleotide-sugar biosynthesis; CMP-3-deoxy-D-manno-octulosonate biosynthesis; CMP-3-deoxy-D-manno-octulosonate from 3-deoxy-D-manno-octulosonate and CTP: step 1/1. It participates in bacterial outer membrane biogenesis; lipopolysaccharide biosynthesis. In terms of biological role, activates KDO (a required 8-carbon sugar) for incorporation into bacterial lipopolysaccharide in Gram-negative bacteria. This Chlorobium phaeovibrioides (strain DSM 265 / 1930) (Prosthecochloris vibrioformis (strain DSM 265)) protein is 3-deoxy-manno-octulosonate cytidylyltransferase.